A 345-amino-acid polypeptide reads, in one-letter code: Ketol-acid reductoisomerase (NADP(+)) (345 aa).

The region spanning 2 to 182 (AKVYHDSSAD…GTTRAGVLET (181 aa)) is the KARI N-terminal Rossmann domain. Residues 25-28 (YGSQ), R48, S51, S53, and 83-86 (DTEQ) each bind NADP(+). Residue H108 is part of the active site. Residue G134 participates in NADP(+) binding. The KARI C-terminal knotted domain occupies 183–328 (TFKEETETDL…AQLRDMMTFL (146 aa)). The Mg(2+) site is built by D191, E195, E227, and E231. S252 serves as a coordination point for substrate.

The protein belongs to the ketol-acid reductoisomerase family. Mg(2+) is required as a cofactor.

The catalysed reaction is (2R)-2,3-dihydroxy-3-methylbutanoate + NADP(+) = (2S)-2-acetolactate + NADPH + H(+). The enzyme catalyses (2R,3R)-2,3-dihydroxy-3-methylpentanoate + NADP(+) = (S)-2-ethyl-2-hydroxy-3-oxobutanoate + NADPH + H(+). It functions in the pathway amino-acid biosynthesis; L-isoleucine biosynthesis; L-isoleucine from 2-oxobutanoate: step 2/4. Its pathway is amino-acid biosynthesis; L-valine biosynthesis; L-valine from pyruvate: step 2/4. Involved in the biosynthesis of branched-chain amino acids (BCAA). Catalyzes an alkyl-migration followed by a ketol-acid reduction of (S)-2-acetolactate (S2AL) to yield (R)-2,3-dihydroxy-isovalerate. In the isomerase reaction, S2AL is rearranged via a Mg-dependent methyl migration to produce 3-hydroxy-3-methyl-2-ketobutyrate (HMKB). In the reductase reaction, this 2-ketoacid undergoes a metal-dependent reduction by NADPH to yield (R)-2,3-dihydroxy-isovalerate. The protein is Ketol-acid reductoisomerase (NADP(+)) of Koribacter versatilis (strain Ellin345).